The following is a 520-amino-acid chain: Ribonuclease Y (520 aa).

Residues T4–V24 form a helical membrane-spanning segment. The segment at K86–E116 is disordered. One can recognise a KH domain in the interval T210–L273. The region spanning V336 to A429 is the HD domain.

It belongs to the RNase Y family.

It localises to the cell membrane. Endoribonuclease that initiates mRNA decay. The protein is Ribonuclease Y of Bacillus cereus (strain ATCC 10987 / NRS 248).